The sequence spans 89 residues: Small ribosomal subunit protein uS15 (89 aa).

The protein belongs to the universal ribosomal protein uS15 family. In terms of assembly, part of the 30S ribosomal subunit. Forms a bridge to the 50S subunit in the 70S ribosome, contacting the 23S rRNA.

Functionally, one of the primary rRNA binding proteins, it binds directly to 16S rRNA where it helps nucleate assembly of the platform of the 30S subunit by binding and bridging several RNA helices of the 16S rRNA. In terms of biological role, forms an intersubunit bridge (bridge B4) with the 23S rRNA of the 50S subunit in the ribosome. This is Small ribosomal subunit protein uS15 from Bordetella avium (strain 197N).